We begin with the raw amino-acid sequence, 252 residues long: Urease accessory protein UreH (252 aa).

The protein belongs to the UreD family. UreH, UreF and UreG form a complex that acts as a GTP-hydrolysis-dependent molecular chaperone, activating the urease apoprotein by helping to assemble the nickel containing metallocenter of UreC. The UreE protein probably delivers the nickel.

It is found in the cytoplasm. In terms of biological role, required for maturation of urease via the functional incorporation of the urease nickel metallocenter. This Helicobacter hepaticus (strain ATCC 51449 / 3B1) protein is Urease accessory protein UreH.